The primary structure comprises 287 residues: tRNA pseudouridine synthase B (287 aa).

The active-site Nucleophile is aspartate 38.

This sequence belongs to the pseudouridine synthase TruB family. Type 1 subfamily.

The enzyme catalyses uridine(55) in tRNA = pseudouridine(55) in tRNA. In terms of biological role, responsible for synthesis of pseudouridine from uracil-55 in the psi GC loop of transfer RNAs. In Aquifex aeolicus (strain VF5), this protein is tRNA pseudouridine synthase B.